The primary structure comprises 204 residues: Thymidylate kinase (204 aa).

11-18 (GLDKSGKT) is an ATP binding site.

It belongs to the thymidylate kinase family.

The enzyme catalyses dTMP + ATP = dTDP + ADP. The protein operates within pyrimidine metabolism; dTTP biosynthesis. The sequence is that of Thymidylate kinase (TMK) from Camelus.